We begin with the raw amino-acid sequence, 620 residues long: Apoptosis regulator MC163R (620 aa).

The chain crosses the membrane as a helical span at residues alanine 113–leucine 133.

It localises to the host mitochondrion. The protein localises to the host membrane. Its function is as follows. Plays a role in the inhibition of host apoptosis. Prevents host TNF-alpha-induced mitochondrial membrane permeabilization and reduces caspase-3/CASP3 and PARP1 cleavage induced by the intrinsic apoptotic pathway. This is Apoptosis regulator MC163R (MC163R) from Homo sapiens (Human).